We begin with the raw amino-acid sequence, 380 residues long: ATP phosphoribosyltransferase regulatory subunit (380 aa).

This sequence belongs to the class-II aminoacyl-tRNA synthetase family. HisZ subfamily. Heteromultimer composed of HisG and HisZ subunits.

It is found in the cytoplasm. It functions in the pathway amino-acid biosynthesis; L-histidine biosynthesis; L-histidine from 5-phospho-alpha-D-ribose 1-diphosphate: step 1/9. Functionally, required for the first step of histidine biosynthesis. May allow the feedback regulation of ATP phosphoribosyltransferase activity by histidine. The sequence is that of ATP phosphoribosyltransferase regulatory subunit from Thermoanaerobacter pseudethanolicus (strain ATCC 33223 / 39E) (Clostridium thermohydrosulfuricum).